A 203-amino-acid polypeptide reads, in one-letter code: Molybdenum cofactor guanylyltransferase (203 aa).

GTP contacts are provided by residues Leu-12–Gly-14, Lys-25, Asn-53, Asp-71, and Asp-101. Residue Asp-101 coordinates Mg(2+).

This sequence belongs to the MobA family. As to quaternary structure, monomer. It depends on Mg(2+) as a cofactor.

It is found in the cytoplasm. The catalysed reaction is Mo-molybdopterin + GTP + H(+) = Mo-molybdopterin guanine dinucleotide + diphosphate. In terms of biological role, transfers a GMP moiety from GTP to Mo-molybdopterin (Mo-MPT) cofactor (Moco or molybdenum cofactor) to form Mo-molybdopterin guanine dinucleotide (Mo-MGD) cofactor. In Methylibium petroleiphilum (strain ATCC BAA-1232 / LMG 22953 / PM1), this protein is Molybdenum cofactor guanylyltransferase.